A 408-amino-acid chain; its full sequence is uncharacterized protein (408 aa).

Disordered stretches follow at residues 218–265 and 367–408; these read EPTA…TSER and MESE…ETPN. Residues 369–379 are compositionally biased toward low complexity; that stretch reads SEVINSSSSTS. The segment covering 394 to 408 has biased composition (acidic residues); the sequence is IVEEVPETAENETPN.

To C.elegans C05E11.1.

This is an uncharacterized protein from Arabidopsis thaliana (Mouse-ear cress).